The sequence spans 262 residues: Apolipoprotein A-Ia (262 aa).

The signal sequence occupies residues 1 to 18 (MKFVALALTLLLALGSQA). Residues 32 to 63 (YKAAALVYLNQVKDQAEKALDNLDGTDYEQYK) are 3 X approximate tandem repeats. 2 consecutive repeat copies span residues 64-85 (LQLSESLTKLQEYAQTTSQALT) and 87-107 (YAETISTQLMENTKQLRERVM). Residues 64–262 (LQLSESLTKL…YETIAKAIQA (199 aa)) form a 10 X approximate tandem repeats region. The 3; half-length repeat unit spans residues 108 to 118 (TDVEDLRSKLE). 5 repeat units span residues 119–140 (PHRAELYTALQKHIDEYREKLE), 141–162 (PVFQEYSALNRQNAEQLRAKLE), 163–184 (PLMDDIRKAFESNIEETKSKVV), 185–206 (PMVEAVRTKLTERLEDLRTMAA), and 207–228 (PYAEEYKEQLVKAVEEAREKIA). One copy of the 9; half-length repeat lies at 229–239 (PHTQDLQTRME). Repeat 10 spans residues 240–262 (PYMENVRTTFAQMYETIAKAIQA).

Belongs to the apolipoprotein A1/A4/E family. In terms of assembly, homodimer. Interacts with naxe and yjefn3.

It is found in the secreted. Participates in the reverse transport of cholesterol from tissues to the liver for excretion by promoting cholesterol efflux from tissues and by acting as a cofactor for the lecithin cholesterol acyltransferase (LCAT). This chain is Apolipoprotein A-Ia, found in Danio rerio (Zebrafish).